The following is a 66-amino-acid chain: Large ribosomal subunit protein bL33c (66 aa).

This sequence belongs to the bacterial ribosomal protein bL33 family.

The protein resides in the plastid. It is found in the chloroplast. The protein is Large ribosomal subunit protein bL33c of Aethionema grandiflorum (Persian stone-cress).